We begin with the raw amino-acid sequence, 1044 residues long: Phosphatidylinositol 4,5-bisphosphate 3-kinase catalytic subunit delta isoform (1044 aa).

Positions 16–105 (ENQSVVVDFL…LPVLRLVARE (90 aa)) constitute a PI3K-ABD domain. One can recognise a PI3K-RBD domain in the interval 187–278 (NRALLVNVKF…GLTPHLTMVH (92 aa)). Positions 287–312 (DEQSNPAPQVQKPRAKPPPIPAKKPS) are disordered. The C2 PI3K-type domain occupies 319-476 (LEQPFRIELI…SAAALLICLP (158 aa)). A PIK helical domain is found at 497 to 674 (HSECVHVTEE…GLILEAYCRG (178 aa)). Residue Y524 is modified to Phosphotyrosine. In terms of domain architecture, PI3K/PI4K catalytic spans 745 to 1027 (CVEQCTFMDS…KFNEALRESW (283 aa)). The segment at 751-757 (FMDSKMK) is G-loop. The catalytic loop stretch occupies residues 890–898 (GIGDRHSDN). The activation loop stretch occupies residues 909–935 (HIDFGHFLGNFKTKFGINRERVPFILT). Residue S1039 is modified to Phosphoserine; by autocatalysis.

It belongs to the PI3/PI4-kinase family. In terms of assembly, heterodimer of a catalytic subunit PIK3CD and a p85 regulatory subunit (PIK3R1, PIK3R2 or PIK3R3). Interacts with ERAS. Interacts with HRAS. Post-translationally, autophosphorylation on Ser-1039 results in the almost complete inactivation of the lipid kinase activity. As to expression, in humans, the highest levels of expression are seen in peripheral blood mononuclear cells, spleen, and thymus, and low levels of expression in testes, uterus, colon, and small intestine but not in other tissues examined including prostate, heart, brain, and liver. Isoform 2 is expressed in normal thymus, lung and spleen tissues, and is detected at low levels in normal lysates from colon and ovarian biopsies, at elevated levels in lysates from colorectal tumors and is abundantly expressed in some ovarian tumors (at protein level). Both isoform 1 and isoform 2 are widely expressed. Isoform 1 is expressed predominantly in leukocytes.

The protein localises to the cytoplasm. The enzyme catalyses a 1,2-diacyl-sn-glycero-3-phospho-(1D-myo-inositol-4,5-bisphosphate) + ATP = a 1,2-diacyl-sn-glycero-3-phospho-(1D-myo-inositol-3,4,5-trisphosphate) + ADP + H(+). It carries out the reaction a 1,2-diacyl-sn-glycero-3-phospho-(1D-myo-inositol) + ATP = a 1,2-diacyl-sn-glycero-3-phospho-(1D-myo-inositol-3-phosphate) + ADP + H(+). The catalysed reaction is 1-octadecanoyl-2-(5Z,8Z,11Z,14Z)-eicosatetraenoyl-sn-glycero-3-phospho-1D-myo-inositol 4,5-bisphosphate + ATP = 1-octadecanoyl-2-(5Z,8Z,11Z,14Z-eicosatetraenoyl)-sn-glycero-3-phospho-(1D-myo-inositol 3,4,5-triphosphate) + ADP + H(+). It participates in phospholipid metabolism; phosphatidylinositol phosphate biosynthesis. Activated by growth factors and cytokine receptors through a tyrosine-kinase-dependent mechanism. Activated by RAS. IC87114 inhibits lipid kinase activity and is selective in cells at doses up to 5-10 uM. IC87114 blocks T-cell receptor signaling in naive and memory T-cells and reduces cytokine production by memory T-cells. In terms of biological role, phosphoinositide-3-kinase (PI3K) phosphorylates phosphatidylinositol (PI) and its phosphorylated derivatives at position 3 of the inositol ring to produce 3-phosphoinositides. Uses ATP and PtdIns(4,5)P2 (phosphatidylinositol 4,5-bisphosphate) to generate phosphatidylinositol 3,4,5-trisphosphate (PIP3). PIP3 plays a key role by recruiting PH domain-containing proteins to the membrane, including AKT1 and PDPK1, activating signaling cascades involved in cell growth, survival, proliferation, motility and morphology. Mediates immune responses. Plays a role in B-cell development, proliferation, migration, and function. Required for B-cell receptor (BCR) signaling. Mediates B-cell proliferation response to anti-IgM, anti-CD40 and IL4 stimulation. Promotes cytokine production in response to TLR4 and TLR9. Required for antibody class switch mediated by TLR9. Involved in the antigen presentation function of B-cells. Involved in B-cell chemotaxis in response to CXCL13 and sphingosine 1-phosphate (S1P). Required for proliferation, signaling and cytokine production of naive, effector and memory T-cells. Required for T-cell receptor (TCR) signaling. Mediates TCR signaling events at the immune synapse. Activation by TCR leads to antigen-dependent memory T-cell migration and retention to antigenic tissues. Together with PIK3CG participates in T-cell development. Contributes to T-helper cell expansion and differentiation. Required for T-cell migration mediated by homing receptors SELL/CD62L, CCR7 and S1PR1 and antigen dependent recruitment of T-cells. Together with PIK3CG is involved in natural killer (NK) cell development and migration towards the sites of inflammation. Participates in NK cell receptor activation. Plays a role in NK cell maturation and cytokine production. Together with PIK3CG is involved in neutrophil chemotaxis and extravasation. Together with PIK3CG participates in neutrophil respiratory burst. Plays important roles in mast-cell development and mast cell mediated allergic response. Involved in stem cell factor (SCF)-mediated proliferation, adhesion and migration. Required for allergen-IgE-induced degranulation and cytokine release. The lipid kinase activity is required for its biological function. Isoform 2 may be involved in stabilizing total RAS levels, resulting in increased ERK phosphorylation and increased PI3K activity. The protein is Phosphatidylinositol 4,5-bisphosphate 3-kinase catalytic subunit delta isoform (PIK3CD) of Homo sapiens (Human).